The chain runs to 244 residues: 6-carboxyhexanoate--CoA ligase (244 aa).

This sequence belongs to the BioW family. Homodimer. It depends on Mg(2+) as a cofactor.

It carries out the reaction heptanedioate + ATP + CoA = 6-carboxyhexanoyl-CoA + AMP + diphosphate. It participates in metabolic intermediate metabolism; pimeloyl-CoA biosynthesis; pimeloyl-CoA from pimelate: step 1/1. Catalyzes the transformation of pimelate into pimeloyl-CoA with concomitant hydrolysis of ATP to AMP. The protein is 6-carboxyhexanoate--CoA ligase of Methanococcus maripaludis (strain DSM 14266 / JCM 13030 / NBRC 101832 / S2 / LL).